The primary structure comprises 447 residues: MHVLNILWVVFGIGLMLVLNLKFKINSMVALLVAALSVGMLAGMDLMSLLHTMKAGFGNTLGELAIIVVFGAVIGKLMVDSGAAHQIAHTLLARLGLRYVQLSVIIIGLIFGLAMFYEVAFIMLAPLVIVIAAEAKIPFLKLAIPAVAAATTAHSLFPPQPGPVALVNAYGADMGMVYIYGVLVTIPSVICAGLILPKFLGNLERPTPSFLKADQPVDMNNLPSFGVSILVPLIPAIIMISTTIANIWLVKDTPAWEVVNFIGSSPIAMFIAMVVAFVLFGTARGHDMQWVMNAFESAVKSIAMVILIIGAGGVLKQTIIDTGIGDTIGMLMSHGNISPYIMAWLITVLIRLATGQGVVSAMTAAGIISAAILDPATGQLVGVNPALLVLATAAGSNTLTHINDASFWLFKGYFDLSVKDTLKTWGLLELVNSVVGLIIVLIISMVA.

The helical transmembrane segment at 1–21 (MHVLNILWVVFGIGLMLVLNL) threads the bilayer. Over 22 to 28 (KFKINSM) the chain is Periplasmic. The helical transmembrane segment at 29–49 (VALLVAALSVGMLAGMDLMSL) threads the bilayer. Residues 50-54 (LHTMK) are Cytoplasmic-facing. Residues 55-75 (AGFGNTLGELAIIVVFGAVIG) traverse the membrane as a helical segment. The Periplasmic portion of the chain corresponds to 76–103 (KLMVDSGAAHQIAHTLLARLGLRYVQLS). The chain crosses the membrane as a helical span at residues 104 to 124 (VIIIGLIFGLAMFYEVAFIML). Residues 125–126 (AP) lie on the Cytoplasmic side of the membrane. The helical transmembrane segment at 127-147 (LVIVIAAEAKIPFLKLAIPAV) threads the bilayer. The Periplasmic segment spans residues 148–175 (AAATTAHSLFPPQPGPVALVNAYGADMG). The helical transmembrane segment at 176-196 (MVYIYGVLVTIPSVICAGLIL) threads the bilayer. Topologically, residues 197–224 (PKFLGNLERPTPSFLKADQPVDMNNLPS) are cytoplasmic. A helical transmembrane segment spans residues 225–245 (FGVSILVPLIPAIIMISTTIA). Residues 246-260 (NIWLVKDTPAWEVVN) lie on the Periplasmic side of the membrane. The helical transmembrane segment at 261-281 (FIGSSPIAMFIAMVVAFVLFG) threads the bilayer. The Cytoplasmic portion of the chain corresponds to 282-294 (TARGHDMQWVMNA). A helical transmembrane segment spans residues 295–315 (FESAVKSIAMVILIIGAGGVL). Residues 316–329 (KQTIIDTGIGDTIG) are Periplasmic-facing. Residues 330–350 (MLMSHGNISPYIMAWLITVLI) form a helical membrane-spanning segment. Arg351 is a topological domain (cytoplasmic). The helical transmembrane segment at 352–372 (LATGQGVVSAMTAAGIISAAI) threads the bilayer. Residues 373–374 (LD) are Periplasmic-facing. The chain crosses the membrane as a helical span at residues 375–395 (PATGQLVGVNPALLVLATAAG). Residues 396–426 (SNTLTHINDASFWLFKGYFDLSVKDTLKTWG) are Cytoplasmic-facing. A helical transmembrane segment spans residues 427–447 (LLELVNSVVGLIIVLIISMVA).

The protein belongs to the GntP permease family.

Its subcellular location is the cell inner membrane. Its pathway is carbohydrate acid metabolism; D-gluconate degradation. Functionally, high-affinity gluconate transporter with fairly broad specificity, including low affinity for glucuronate, several disaccharides, and some hexoses, but not glucose. This is High-affinity gluconate transporter (gntP) from Escherichia coli (strain K12).